Reading from the N-terminus, the 363-residue chain is Spermidine/putrescine import ATP-binding protein PotA (363 aa).

An ABC transporter domain is found at 6–236; the sequence is LEIRNVTRRF…PRSRFVADFI (231 aa). 38–45 provides a ligand contact to ATP; sequence GPSGCGKT.

It belongs to the ABC transporter superfamily. Spermidine/putrescine importer (TC 3.A.1.11.1) family. The complex is composed of two ATP-binding proteins (PotA), two transmembrane proteins (PotB and PotC) and a solute-binding protein (PotD).

The protein resides in the cell inner membrane. The catalysed reaction is ATP + H2O + polyamine-[polyamine-binding protein]Side 1 = ADP + phosphate + polyamineSide 2 + [polyamine-binding protein]Side 1.. Part of the ABC transporter complex PotABCD involved in spermidine/putrescine import. Responsible for energy coupling to the transport system. This chain is Spermidine/putrescine import ATP-binding protein PotA, found in Pseudomonas aeruginosa (strain UCBPP-PA14).